The primary structure comprises 405 residues: Probable succinyl-diaminopimelate desuccinylase (405 aa).

His72 contacts Zn(2+). Asp74 is an active-site residue. Asp105 is a Zn(2+) binding site. Catalysis depends on Glu139, which acts as the Proton acceptor. 3 residues coordinate Zn(2+): Glu140, Glu165, and His377.

The protein belongs to the peptidase M20A family. Zn(2+) is required as a cofactor. Co(2+) serves as cofactor.

It carries out the reaction N-succinyl-(2S,6S)-2,6-diaminopimelate + H2O = (2S,6S)-2,6-diaminopimelate + succinate. The protein operates within amino-acid biosynthesis; L-lysine biosynthesis via DAP pathway; LL-2,6-diaminopimelate from (S)-tetrahydrodipicolinate (succinylase route): step 3/3. This Staphylococcus epidermidis (strain ATCC 12228 / FDA PCI 1200) protein is Probable succinyl-diaminopimelate desuccinylase (dapE).